The chain runs to 273 residues: Pantothenate synthetase (273 aa).

27–34 (MGALHEGH) provides a ligand contact to ATP. Catalysis depends on His34, which acts as the Proton donor. A (R)-pantoate-binding site is contributed by Gln58. Gln58 is a binding site for beta-alanine. Residue 144–147 (GKKD) participates in ATP binding. Gln150 provides a ligand contact to (R)-pantoate. ATP is bound by residues Val173 and 181–184 (LSSR).

It belongs to the pantothenate synthetase family. In terms of assembly, homodimer.

It is found in the cytoplasm. The catalysed reaction is (R)-pantoate + beta-alanine + ATP = (R)-pantothenate + AMP + diphosphate + H(+). Its pathway is cofactor biosynthesis; (R)-pantothenate biosynthesis; (R)-pantothenate from (R)-pantoate and beta-alanine: step 1/1. Its function is as follows. Catalyzes the condensation of pantoate with beta-alanine in an ATP-dependent reaction via a pantoyl-adenylate intermediate. The chain is Pantothenate synthetase from Sulfurimonas denitrificans (strain ATCC 33889 / DSM 1251) (Thiomicrospira denitrificans (strain ATCC 33889 / DSM 1251)).